A 199-amino-acid polypeptide reads, in one-letter code: MNCVCRLVLVVLSLWPDRVVAPGPPAGSPRVSSDPRADLDSAVLLTRSLLADTRQLAAQMRDKFPADGDHSLDSLPTLAMSAGTLGSLQLPGVLTRLRVDLMSYLRHVQWLRRAGGPSLKTLEPELGALQARLERLLRRLQLLMSRLALPQAAPDQPVIPLGPPASAWGSIRAAHAILGGLHLTLDWAVRGLLLLKTRL.

Positions Met-1–Ala-21 are cleaved as a signal peptide. Residues His-182–Arg-190 form an important for interaction with IL11RA and for the stimulation of cell proliferation region.

It belongs to the IL-6 superfamily. As to quaternary structure, interacts with either IL11RA1 or IL11RA2 to associate with IL6ST, giving rise to a multimeric signaling complex.

The protein localises to the secreted. Cytokine that stimulates the proliferation of hematopoietic stem cells and megakaryocyte progenitor cells and induces megakaryocyte maturation resulting in increased platelet production. Also promotes the proliferation of hepatocytes in response to liver damage. Binding to its receptor formed by IL6ST and either IL11RA1 or IL11RA2 activates a signaling cascade that promotes cell proliferation, also in the context of various cancers. Signaling leads to the activation of intracellular protein kinases and the phosphorylation of STAT3. The interaction with the membrane-bound IL11RA and IL6ST stimulates 'classic signaling', whereas the binding of IL11 and soluble IL11RA to IL6ST stimulates 'trans-signaling'. The sequence is that of Interleukin-11 from Mus musculus (Mouse).